The chain runs to 141 residues: Large ribosomal subunit protein uL11 (141 aa).

The protein belongs to the universal ribosomal protein uL11 family. In terms of assembly, part of the ribosomal stalk of the 50S ribosomal subunit. Interacts with L10 and the large rRNA to form the base of the stalk. L10 forms an elongated spine to which L12 dimers bind in a sequential fashion forming a multimeric L10(L12)X complex. Post-translationally, one or more lysine residues are methylated.

In terms of biological role, forms part of the ribosomal stalk which helps the ribosome interact with GTP-bound translation factors. The protein is Large ribosomal subunit protein uL11 of Listeria innocua serovar 6a (strain ATCC BAA-680 / CLIP 11262).